Consider the following 367-residue polypeptide: Acryloyl-CoA reductase electron transfer subunit beta (367 aa).

305 to 333 provides a ligand contact to FAD; it reads VYVALGISGAIQHKAGMQDSELIIAVNKD.

In terms of assembly, heterohexadecamer; tetramer of tetramers. Each tetramer is composed of 2 alpha (AcrC), a beta (AcrA) and a gamma (AcrB) subunit.

The protein resides in the cytoplasm. Part of the ETF-acryloyl-CoA reductase complex involved in the pathway of L-alanine fermentation. The electron transfer flavoprotein (ETF) serves as a specific electron acceptor for acryloyl-CoA reductase. The protein is Acryloyl-CoA reductase electron transfer subunit beta (acrA) of Anaerotignum propionicum (Clostridium propionicum).